A 344-amino-acid chain; its full sequence is WW domain binding protein 1-like (344 aa).

A helical membrane pass occupies residues 42 to 62; the sequence is LWWFWLVWTIIIILSCCCVCH. Disordered stretches follow at residues 132–250 and 302–321; these read LLPP…RFTG and CLSS…PRPP. Residues 145-173 show a composition bias toward low complexity; sequence PGADQPQGSQGAQSSPLSGPSRSSTRPPS. At serine 173 the chain carries Phosphoserine. Over residues 212 to 228 the composition is skewed to basic and acidic residues; it reads LDRDSECKEELLKDSSS.

The protein resides in the membrane. This is WW domain binding protein 1-like (Wbp1l) from Rattus norvegicus (Rat).